Consider the following 62-residue polypeptide: Large ribosomal subunit protein bL28 (62 aa).

Belongs to the bacterial ribosomal protein bL28 family.

The chain is Large ribosomal subunit protein bL28 from Helicobacter acinonychis (strain Sheeba).